The sequence spans 382 residues: ATP phosphoribosyltransferase regulatory subunit (382 aa).

This sequence belongs to the class-II aminoacyl-tRNA synthetase family. HisZ subfamily. In terms of assembly, heteromultimer composed of HisG and HisZ subunits.

It localises to the cytoplasm. Its pathway is amino-acid biosynthesis; L-histidine biosynthesis; L-histidine from 5-phospho-alpha-D-ribose 1-diphosphate: step 1/9. In terms of biological role, required for the first step of histidine biosynthesis. May allow the feedback regulation of ATP phosphoribosyltransferase activity by histidine. The sequence is that of ATP phosphoribosyltransferase regulatory subunit from Burkholderia pseudomallei (strain 1106a).